We begin with the raw amino-acid sequence, 205 residues long: Ribosomal RNA small subunit methyltransferase G (205 aa).

S-adenosyl-L-methionine-binding positions include Gly-76, Leu-81, Ile-127 to Glu-128, and Arg-140.

This sequence belongs to the methyltransferase superfamily. RNA methyltransferase RsmG family.

The protein resides in the cytoplasm. The enzyme catalyses guanosine(527) in 16S rRNA + S-adenosyl-L-methionine = N(7)-methylguanosine(527) in 16S rRNA + S-adenosyl-L-homocysteine. Functionally, specifically methylates the N7 position of guanine in position 527 of 16S rRNA. The polypeptide is Ribosomal RNA small subunit methyltransferase G (Francisella tularensis subsp. novicida (strain U112)).